Reading from the N-terminus, the 366-residue chain is Anhydro-N-acetylmuramic acid kinase (366 aa).

Residue 10-17 (GTSLDGVD) coordinates ATP.

This sequence belongs to the anhydro-N-acetylmuramic acid kinase family.

The enzyme catalyses 1,6-anhydro-N-acetyl-beta-muramate + ATP + H2O = N-acetyl-D-muramate 6-phosphate + ADP + H(+). It functions in the pathway amino-sugar metabolism; 1,6-anhydro-N-acetylmuramate degradation. The protein operates within cell wall biogenesis; peptidoglycan recycling. Its function is as follows. Catalyzes the specific phosphorylation of 1,6-anhydro-N-acetylmuramic acid (anhMurNAc) with the simultaneous cleavage of the 1,6-anhydro ring, generating MurNAc-6-P. Is required for the utilization of anhMurNAc either imported from the medium or derived from its own cell wall murein, and thus plays a role in cell wall recycling. This Nitrobacter winogradskyi (strain ATCC 25391 / DSM 10237 / CIP 104748 / NCIMB 11846 / Nb-255) protein is Anhydro-N-acetylmuramic acid kinase.